The following is a 444-amino-acid chain: Ribosomal protein uS12 methylthiotransferase RimO (444 aa).

The MTTase N-terminal domain occupies 4 to 120; sequence KSAALVSLGC…LKSFIRDHEA (117 aa). Positions 13, 49, 83, 157, 161, and 164 each coordinate [4Fe-4S] cluster. Residues 143–371 form the Radical SAM core domain; sequence VEGRSSAYVK…LELQRGISRR (229 aa). Positions 374 to 442 constitute a TRAM domain; that stretch reads ESLVGRVLPV…DYDVEAELLS (69 aa).

It belongs to the methylthiotransferase family. RimO subfamily. The cofactor is [4Fe-4S] cluster.

It localises to the cytoplasm. It catalyses the reaction L-aspartate(89)-[ribosomal protein uS12]-hydrogen + (sulfur carrier)-SH + AH2 + 2 S-adenosyl-L-methionine = 3-methylsulfanyl-L-aspartate(89)-[ribosomal protein uS12]-hydrogen + (sulfur carrier)-H + 5'-deoxyadenosine + L-methionine + A + S-adenosyl-L-homocysteine + 2 H(+). Its function is as follows. Catalyzes the methylthiolation of an aspartic acid residue of ribosomal protein uS12. In Syntrophobacter fumaroxidans (strain DSM 10017 / MPOB), this protein is Ribosomal protein uS12 methylthiotransferase RimO.